The following is a 368-amino-acid chain: Probable dual-specificity RNA methyltransferase RlmN (368 aa).

Glutamate 100 (proton acceptor) is an active-site residue. A Radical SAM core domain is found at 106–344; that stretch reads QYYGLSVCVT…CVVRQEHGTD (239 aa). Cysteine 113 and cysteine 349 form a disulfide bridge. [4Fe-4S] cluster is bound by residues cysteine 120, cysteine 124, and cysteine 127. S-adenosyl-L-methionine contacts are provided by residues 172-173, serine 204, 227-229, and asparagine 305; these read GE and SLH. Cysteine 349 acts as the S-methylcysteine intermediate in catalysis.

Belongs to the radical SAM superfamily. RlmN family. The cofactor is [4Fe-4S] cluster.

The protein localises to the cytoplasm. It catalyses the reaction adenosine(2503) in 23S rRNA + 2 reduced [2Fe-2S]-[ferredoxin] + 2 S-adenosyl-L-methionine = 2-methyladenosine(2503) in 23S rRNA + 5'-deoxyadenosine + L-methionine + 2 oxidized [2Fe-2S]-[ferredoxin] + S-adenosyl-L-homocysteine. The catalysed reaction is adenosine(37) in tRNA + 2 reduced [2Fe-2S]-[ferredoxin] + 2 S-adenosyl-L-methionine = 2-methyladenosine(37) in tRNA + 5'-deoxyadenosine + L-methionine + 2 oxidized [2Fe-2S]-[ferredoxin] + S-adenosyl-L-homocysteine. Its function is as follows. Specifically methylates position 2 of adenine 2503 in 23S rRNA and position 2 of adenine 37 in tRNAs. The chain is Probable dual-specificity RNA methyltransferase RlmN from Streptococcus agalactiae serotype III (strain NEM316).